The primary structure comprises 344 residues: MDVVLEVTDQFMFDYMYAWLLPARPALYDFPDKTNGTAQAFSSWVYEPATKFFSLEPSQAAYQSIWTRDNIYRQALSLFLILWLFGLVTYYVFASLSYIFVFDKKTMEHPKFLKNQVWLEIKQTNAALPVMAFFTFPFLVAEVRGYSLLYDTTAEGPGRWYDFFQFPLFIMFTDFGIYWIHRGLHHPLVYKHLHKPHHKWIMPTPYASHAFHPIDGFAQSIPYHIFPFIFPLQKMAYVGLFVFINFWTIMIHDGEYYANNPVINGAACHSVHHFAFNYNYGQFTTLWDRLGGSYREPDGDMFAKEKKMSTTTWKKQVNEMEKIVKEVEGEDDRLYEPTETKKSK.

3 helical membrane passes run 76 to 96 (LSLF…FASL), 123 to 143 (QTNA…VAEV), and 160 to 180 (WYDF…IYWI). The Fatty acid hydroxylase domain occupies 167–292 (PLFIMFTDFG…FTTLWDRLGG (126 aa)). Residues 181 to 185 (HRGLH) carry the Histidine box-1 motif. The Histidine box-2 signature appears at 194 to 198 (HKPHH). A helical membrane pass occupies residues 224-244 (HIFPFIFPLQKMAYVGLFVFI). The short motif at 269–273 (HSVHH) is the Histidine box-3 element.

This sequence belongs to the sterol desaturase family. Fe cation serves as cofactor.

It is found in the endoplasmic reticulum membrane. The catalysed reaction is a Delta(7)-sterol + 2 Fe(II)-[cytochrome b5] + O2 + 2 H(+) = a Delta(5),Delta(7)-sterol + 2 Fe(III)-[cytochrome b5] + 2 H2O. It participates in steroid metabolism; ergosterol biosynthesis; ergosterol from zymosterol: step 3/5. Functionally, catalyzes the introduction of a C-5 double bond in the B ring of ergosterol. May contribute to the regulation of ergosterol biosynthesis. The chain is Probable Delta(7)-sterol 5(6)-desaturase from Neurospora crassa (strain ATCC 24698 / 74-OR23-1A / CBS 708.71 / DSM 1257 / FGSC 987).